The sequence spans 632 residues: MSFKVNWNSLETDSLSTWTKEILTNALNSGKSPHILASNISIKDLNFGQSAPDFEILEIGELDRDRFRGIFKISYSGDFHLTLHTKVQANPLNIYYSNSLEKEVGIEDSEFITPQFGLSNEQFAIPLDLKLSDIKISGIGIIVFSKSKGLTLVFRNDPLDSIKVSSTFDTVQVLANFLQKQIESQIRDLFRETLPTLIHQLSLKYLSLDNNMNELRTKLAANASTSSSSTSSTSSSTTSSSSSSSPSSFTSSLDSANTTTSLKMLENEEEDFSLVYSAKNLQKNLKLFKSRETMSLHIPRFRNIVQRTHLDKFTKNYPNLINSLALSNNELQKFTHHPHSHNAVPIDIFKNESFEKTDGLLKDISNIQAGNYYKFATQKENTVKPKRRVIRLGKSKNKSKSKTETKTEHNDENSNNDNQIVPLSSTPASSSSSTLIEEMVEEPSTPIMKETSEFINPATKTTPQTQIHHPTPRKLELRVQADPELHSEVSTDLHSRSSAHHALYQEFIRSTQSPSLYDKVLTTCGGVGLGNTGYFSFVPQRALSASPIKALNEELNEKKSMNHMDFNRVSQRLEEKLKQNNGDMLRKNNSMNSNSNSVDAEDKPQLVHHDTLSATAAAYAGLFTAPPPPYYH.

An SMP-LTD domain is found at 1-203; the sequence is MSFKVNWNSL…LPTLIHQLSL (203 aa). Disordered regions lie at residues 221–253 and 384–435; these read ANAS…TSSL and KPKR…SSTL. Residues 224–252 show a composition bias toward low complexity; that stretch reads STSSSSTSSTSSSTTSSSSSSSPSSFTSS. Positions 384 to 400 are enriched in basic residues; that stretch reads KPKRRVIRLGKSKNKSK. The span at 401–412 shows a compositional bias: basic and acidic residues; that stretch reads SKTETKTEHNDE. The segment covering 422 to 435 has biased composition (low complexity); sequence PLSSTPASSSSSTL.

This sequence belongs to the MDM34 family. In terms of assembly, component of the ER-mitochondria encounter structure (ERMES) or MDM complex, composed of MMM1, MDM10, MDM12 and MDM34.

It is found in the mitochondrion outer membrane. Component of the ERMES/MDM complex, which serves as a molecular tether to connect the endoplasmic reticulum (ER) and mitochondria. Components of this complex are involved in the control of mitochondrial shape and protein biogenesis, and function in nonvesicular lipid trafficking between the ER and mitochondria. MDM34 is required for the interaction of the ER-resident membrane protein MMM1 and the outer mitochondrial membrane-resident beta-barrel protein MDM10. In Lodderomyces elongisporus (strain ATCC 11503 / CBS 2605 / JCM 1781 / NBRC 1676 / NRRL YB-4239) (Yeast), this protein is Mitochondrial distribution and morphology protein 34.